We begin with the raw amino-acid sequence, 495 residues long: Glutamyl-tRNA(Gln) amidotransferase subunit A (495 aa).

Active-site charge relay system residues include Lys-75 and Ser-150. The active-site Acyl-ester intermediate is the Ser-174.

This sequence belongs to the amidase family. GatA subfamily. In terms of assembly, heterotrimer of A, B and C subunits.

It carries out the reaction L-glutamyl-tRNA(Gln) + L-glutamine + ATP + H2O = L-glutaminyl-tRNA(Gln) + L-glutamate + ADP + phosphate + H(+). In terms of biological role, allows the formation of correctly charged Gln-tRNA(Gln) through the transamidation of misacylated Glu-tRNA(Gln) in organisms which lack glutaminyl-tRNA synthetase. The reaction takes place in the presence of glutamine and ATP through an activated gamma-phospho-Glu-tRNA(Gln). This chain is Glutamyl-tRNA(Gln) amidotransferase subunit A, found in Paraburkholderia phytofirmans (strain DSM 17436 / LMG 22146 / PsJN) (Burkholderia phytofirmans).